The sequence spans 464 residues: UNC93-like protein 3 (464 aa).

Transmembrane regions (helical) follow at residues 31–51 (VHIL…AQNL), 62–82 (ISLG…SLVV), 84–104 (LMGS…FVAA), 110–130 (WFTM…IWVG), 160–180 (EFWA…LALL), 192–212 (TLLM…MFFI), 251–271 (LLIV…WAEF), 275–295 (IVTP…YGAL), 313–333 (ITFI…WLLL), 341–361 (VLGT…DGIL), and 392–412 (IAIV…IVML).

This sequence belongs to the unc-93 family.

The protein localises to the membrane. This is UNC93-like protein 3 from Arabidopsis thaliana (Mouse-ear cress).